The sequence spans 273 residues: DNA repair protein RecO (273 aa).

The protein belongs to the RecO family.

Its function is as follows. Involved in DNA repair and RecF pathway recombination. This chain is DNA repair protein RecO, found in Mycolicibacterium gilvum (strain PYR-GCK) (Mycobacterium gilvum (strain PYR-GCK)).